The chain runs to 556 residues: Arginine--tRNA ligase (556 aa).

A 'HIGH' region motif is present at residues 132 to 142 (ANPTGNLHLGH).

The protein belongs to the class-I aminoacyl-tRNA synthetase family. Monomer.

Its subcellular location is the cytoplasm. It catalyses the reaction tRNA(Arg) + L-arginine + ATP = L-arginyl-tRNA(Arg) + AMP + diphosphate. The sequence is that of Arginine--tRNA ligase from Bacillus licheniformis (strain ATCC 14580 / DSM 13 / JCM 2505 / CCUG 7422 / NBRC 12200 / NCIMB 9375 / NCTC 10341 / NRRL NRS-1264 / Gibson 46).